Consider the following 272-residue polypeptide: Shikimate dehydrogenase (NADP(+)) (272 aa).

Residues 14 to 16 (SLS) and Thr-61 each bind shikimate. Lys-65 (proton acceptor) is an active-site residue. Asp-102 provides a ligand contact to shikimate. Residues 127 to 131 (GAGGA), 151 to 156 (NRTPSK), and Leu-215 contribute to the NADP(+) site. Tyr-217 provides a ligand contact to shikimate. Gly-239 lines the NADP(+) pocket.

It belongs to the shikimate dehydrogenase family. In terms of assembly, homodimer.

The enzyme catalyses shikimate + NADP(+) = 3-dehydroshikimate + NADPH + H(+). Its pathway is metabolic intermediate biosynthesis; chorismate biosynthesis; chorismate from D-erythrose 4-phosphate and phosphoenolpyruvate: step 4/7. Its function is as follows. Involved in the biosynthesis of the chorismate, which leads to the biosynthesis of aromatic amino acids. Catalyzes the reversible NADPH linked reduction of 3-dehydroshikimate (DHSA) to yield shikimate (SA). This Coxiella burnetii (strain Dugway 5J108-111) protein is Shikimate dehydrogenase (NADP(+)).